The chain runs to 228 residues: Tumor necrosis factor receptor superfamily member 18 (228 aa).

Residues 1–19 (MGAWAMLYGVSMLCVLDLG) form the signal peptide. Residues 20–153 (QPSVVEEPGC…EPLPTEQYGH (134 aa)) lie on the Extracellular side of the membrane. TNFR-Cys repeat units follow at residues 28-61 (GCGP…ERCI), 62-101 (CVTP…FRCV), and 102-142 (ACAM…AVCI). 5 disulfides stabilise this stretch: Cys29-Cys44, Cys62-Cys74, Cys69-Cys82, Cys103-Cys122, and Cys116-Cys141. 2 N-linked (GlcNAc...) asparagine glycosylation sites follow: Asn36 and Asn40. 2 N-linked (GlcNAc...) asparagine glycosylation sites follow: Asn121 and Asn134. The helical transmembrane segment at 154-174 (LTVIFLVMAACIFFLTTVQLG) threads the bilayer. Residues 175–228 (LHIWQLRRQHMCPRETQPFAEVQLSAEDACSFQFPEEERGEQTEEKCHLGGRWP) lie on the Cytoplasmic side of the membrane.

As to quaternary structure, binds to TRAF1, TRAF2, and TRAF3, but not TRAF5 and TRAF6. Binds through its C-terminus to SIVA1/SIVA. As to expression, preferentially expressed in activated T lymphocytes.

It localises to the cell membrane. The protein localises to the secreted. Functionally, receptor for TNFSF18. Seems to be involved in interactions between activated T-lymphocytes and endothelial cells and in the regulation of T-cell receptor-mediated cell death. Mediated NF-kappa-B activation via the TRAF2/NIK pathway. The protein is Tumor necrosis factor receptor superfamily member 18 (Tnfrsf18) of Mus musculus (Mouse).